The chain runs to 434 residues: Monodehydroascorbate reductase, seedling isozyme (434 aa).

FAD contacts are provided by residues 13–16 (GGVA), glutamate 40, arginine 47, lysine 52, isoleucine 95, and 146–147 (RE). NAD(+) contacts are provided by residues 171-177 (GGYIGLE), glutamate 195, arginine 201, and glycine 260. Position 173–177 (173–177 (YIGLE)) interacts with NADP(+). NADP(+)-binding residues include arginine 201 and glycine 260. Aspartate 297 serves as a coordination point for FAD. 313–314 (EH) provides a ligand contact to NAD(+). 313 to 314 (EH) contacts NADP(+). Valine 315 provides a ligand contact to FAD. Residue arginine 319 coordinates L-ascorbate. Residue tyrosine 348 coordinates FAD. Tyrosine 348 lines the NAD(+) pocket. NADP(+) is bound at residue tyrosine 348. Arginine 350 serves as a coordination point for L-ascorbate.

The protein belongs to the FAD-dependent oxidoreductase family. Requires FAD as cofactor.

The protein resides in the cytoplasm. The catalysed reaction is 2 monodehydro-L-ascorbate radical + NADH + H(+) = 2 L-ascorbate + NAD(+). Functionally, catalyzes the conversion of monodehydroascorbate to ascorbate, oxidizing NADH in the process. The polypeptide is Monodehydroascorbate reductase, seedling isozyme (Cucumis sativus (Cucumber)).